Consider the following 292-residue polypeptide: AKT-interacting protein (292 aa).

Positions 1-11 are enriched in polar residues; it reads MNPFWSMSTSS. Positions 1-63 are disordered; the sequence is MNPFWSMSTS…TSPAPAAQST (63 aa). The span at 14-23 shows a compositional bias: basic and acidic residues; it reads KRSEGEEKTL. S30 is subject to Phosphoserine. In terms of domain architecture, UBC core spans 74–222; it reads YLEYSLLAEF…VVDSVKVCTA (149 aa).

The protein belongs to the ubiquitin-conjugating enzyme family. FTS subfamily. In terms of assembly, component of the FTS/Hook/FHIP complex (FHF complex), composed of AKTIP/FTS, FHIP1B, and one or more members of the Hook family of proteins HOOK1, HOOK2, and HOOK3. Interacts directly with HOOK1, HOOK2 and HOOK3. The FHF complex associates with the homotypic vesicular sorting complex (the HOPS complex). Also interacts with AKT1. May interact with FHIP1A.

The protein localises to the cytoplasm. It is found in the cell membrane. In terms of biological role, component of the FTS/Hook/FHIP complex (FHF complex). The FHF complex may function to promote vesicle trafficking and/or fusion via the homotypic vesicular protein sorting complex (the HOPS complex). Regulates apoptosis by enhancing phosphorylation and activation of AKT1. Increases release of TNFSF6 via the AKT1/GSK3B/NFATC1 signaling cascade. FHF complex promotes the distribution of AP-4 complex to the perinuclear area of the cell. The polypeptide is AKT-interacting protein (Homo sapiens (Human)).